We begin with the raw amino-acid sequence, 1337 residues long: GTPase activating protein homolog 3 (1337 aa).

The region spanning 14–264 (PESFADLWDG…LINSINNEDE (251 aa)) is the F-BAR domain. 2 disordered regions span residues 279 to 328 (PKPF…LPIF) and 345 to 392 (ITNS…RFST). The span at 293–302 (TPPPPPPPQI) shows a compositional bias: pro residues. Polar residues predominate over residues 345–358 (ITNSLSLSSDSLQT). A Rho-GAP domain is found at 422 to 611 (CKIEDIMVAQ…NIIEHFKPLQ (190 aa)). Disordered stretches follow at residues 612–689 (VNDS…TTNT), 733–781 (VNNN…HTVA), and 794–821 (ITTPQKSIGDGNGLIGQSPSAHLMSPSE). Composition is skewed to low complexity over residues 621–637 (SSSSSSSTSINQSSIES), 645–687 (SSTN…SSTT), and 734–772 (NNNNQNQNQNQNQNQNQDQNQNQSKQPIQSSNQTQQQVS). Residues 830–859 (YLEDQERCKQRIDELHTQVNELYSDITTIE) adopt a coiled-coil conformation. 2 disordered regions span residues 1041-1102 (SDPD…INNS) and 1114-1166 (KSAL…AHAI). Residues 1047 to 1063 (SPPTISNTTNRLLNTSG) are compositionally biased toward polar residues. Low complexity-rich tracts occupy residues 1064–1102 (STDFSTTPLSSSPSTSSTSLSTNNNNNNNGNRNLDINNS) and 1114–1159 (KSAL…TTTN). A coiled-coil region spans residues 1189 to 1219 (LEINNKLHSQLTEELKKKQQQYKQLIFDIID).

It is found in the cytoplasm. The protein localises to the contractile vacuole. Rho GTPase-activating protein involved in the signal transduction pathway. The polypeptide is GTPase activating protein homolog 3 (mgp3) (Dictyostelium discoideum (Social amoeba)).